The primary structure comprises 274 residues: Large ribosomal subunit protein uL2cz/uL2cy (274 aa).

The interval 224 to 253 (NPIDHPHGGGEGRAPIGRKKPTTPWGYPAL) is disordered.

The protein belongs to the universal ribosomal protein uL2 family. In terms of assembly, part of the 50S ribosomal subunit.

It is found in the plastid. This Epifagus virginiana (Beechdrops) protein is Large ribosomal subunit protein uL2cz/uL2cy (rpl2-A).